The sequence spans 212 residues: Transcription antitermination protein NusB (212 aa).

Belongs to the NusB family.

Functionally, involved in transcription antitermination. Required for transcription of ribosomal RNA (rRNA) genes. Binds specifically to the boxA antiterminator sequence of the ribosomal RNA (rrn) operons. In Gloeothece citriformis (strain PCC 7424) (Cyanothece sp. (strain PCC 7424)), this protein is Transcription antitermination protein NusB.